The chain runs to 212 residues: Pyridoxine/pyridoxamine 5'-phosphate oxidase (212 aa).

Substrate-binding positions include 7-10 and Lys-65; that span reads RAKY. FMN contacts are provided by residues 60-65, 75-76, Lys-82, and Gln-104; these read RTVLLK and FT. Residues Tyr-122, Arg-126, and Ser-130 each coordinate substrate. FMN contacts are provided by residues 139–140 and Trp-184; that span reads QS. Position 190–192 (190–192) interacts with substrate; the sequence is RLH. FMN is bound at residue Arg-194.

The protein belongs to the pyridoxamine 5'-phosphate oxidase family. As to quaternary structure, homodimer. FMN serves as cofactor.

The catalysed reaction is pyridoxamine 5'-phosphate + O2 + H2O = pyridoxal 5'-phosphate + H2O2 + NH4(+). The enzyme catalyses pyridoxine 5'-phosphate + O2 = pyridoxal 5'-phosphate + H2O2. It functions in the pathway cofactor metabolism; pyridoxal 5'-phosphate salvage; pyridoxal 5'-phosphate from pyridoxamine 5'-phosphate: step 1/1. It participates in cofactor metabolism; pyridoxal 5'-phosphate salvage; pyridoxal 5'-phosphate from pyridoxine 5'-phosphate: step 1/1. Catalyzes the oxidation of either pyridoxine 5'-phosphate (PNP) or pyridoxamine 5'-phosphate (PMP) into pyridoxal 5'-phosphate (PLP). In Aliarcobacter butzleri (strain RM4018) (Arcobacter butzleri), this protein is Pyridoxine/pyridoxamine 5'-phosphate oxidase.